Reading from the N-terminus, the 122-residue chain is Cysteine proteinase inhibitor 5 (122 aa).

The signal sequence occupies residues 1-26 (MTSKVVFLLLLSLVVVLLPLYASAAA). Positions 29–117 (GGWSPISNVT…RNLTSFEPAN (89 aa)) constitute a Cystatin domain. An N-linked (GlcNAc...) asparagine glycan is attached at asparagine 36. The short motif at 72–76 (QVVSG) is the Secondary area of contact element. Asparagine 109 carries an N-linked (GlcNAc...) asparagine glycan.

This sequence belongs to the cystatin family. Phytocystatin subfamily.

It localises to the secreted. In terms of biological role, specific inhibitor of cysteine proteinases. Probably involved in the regulation of endogenous processes and in defense against pests and pathogens. The protein is Cysteine proteinase inhibitor 5 (CYS5) of Arabidopsis thaliana (Mouse-ear cress).